The chain runs to 66 residues: Beta-toxin ChFII.9 (66 aa).

Residues 1-66 (KEGYIVDYHT…VWPLPNKRCK (66 aa)) form the LCN-type CS-alpha/beta domain. 4 cysteine pairs are disulfide-bonded: Cys12–Cys65, Cys16–Cys41, Cys25–Cys46, and Cys29–Cys48. Lys66 is modified (lysine amide).

Expressed by the venom gland.

The protein localises to the secreted. Its function is as follows. Beta toxins bind voltage independently at site-4 of sodium channels (Nav) and shift the activation voltage toward more negative potentials, thereby affecting sodium channel activation CC and promoting spontaneous and repetitive firing. In Centruroides hirsutipalpus (Scorpion), this protein is Beta-toxin ChFII.9.